The primary structure comprises 63 residues: Conotoxin Tx-D0111 (63 aa).

Positions 1-19 (MRCLPVFVILLLLIASTPS) are cleaved as a signal peptide. A propeptide spanning residues 20–47 (DTVPLKTKDDMPQASFHGNARRTLQMLS) is cleaved from the precursor.

It belongs to the conotoxin T superfamily. Post-translationally, contains 2 disulfide bonds that can be either 'C1-C3, C2-C4' or 'C1-C4, C2-C3', since these disulfide connectivities have been observed for conotoxins with cysteine framework V (for examples, see AC P0DQQ7 and AC P81755). As to expression, expressed by the venom duct.

It is found in the secreted. The protein is Conotoxin Tx-D0111 of Conus textile (Cloth-of-gold cone).